Reading from the N-terminus, the 96-residue chain is Aspartyl/glutamyl-tRNA(Asn/Gln) amidotransferase subunit C (96 aa).

It belongs to the GatC family. As to quaternary structure, heterotrimer of A, B and C subunits.

The enzyme catalyses L-glutamyl-tRNA(Gln) + L-glutamine + ATP + H2O = L-glutaminyl-tRNA(Gln) + L-glutamate + ADP + phosphate + H(+). It carries out the reaction L-aspartyl-tRNA(Asn) + L-glutamine + ATP + H2O = L-asparaginyl-tRNA(Asn) + L-glutamate + ADP + phosphate + 2 H(+). In terms of biological role, allows the formation of correctly charged Asn-tRNA(Asn) or Gln-tRNA(Gln) through the transamidation of misacylated Asp-tRNA(Asn) or Glu-tRNA(Gln) in organisms which lack either or both of asparaginyl-tRNA or glutaminyl-tRNA synthetases. The reaction takes place in the presence of glutamine and ATP through an activated phospho-Asp-tRNA(Asn) or phospho-Glu-tRNA(Gln). This chain is Aspartyl/glutamyl-tRNA(Asn/Gln) amidotransferase subunit C, found in Neisseria gonorrhoeae (strain ATCC 700825 / FA 1090).